The sequence spans 260 residues: Putative imidazole glycerol phosphate synthase subunit hisF3 (260 aa).

The active site involves Asp135.

It belongs to the HisA/HisF family. As to quaternary structure, heterodimer of HisH and HisF.

It is found in the cytoplasm. It carries out the reaction 5-[(5-phospho-1-deoxy-D-ribulos-1-ylimino)methylamino]-1-(5-phospho-beta-D-ribosyl)imidazole-4-carboxamide + L-glutamine = D-erythro-1-(imidazol-4-yl)glycerol 3-phosphate + 5-amino-1-(5-phospho-beta-D-ribosyl)imidazole-4-carboxamide + L-glutamate + H(+). It functions in the pathway amino-acid biosynthesis; L-histidine biosynthesis; L-histidine from 5-phospho-alpha-D-ribose 1-diphosphate: step 5/9. In terms of biological role, IGPS catalyzes the conversion of PRFAR and glutamine to IGP, AICAR and glutamate. The HisF subunit catalyzes the cyclization activity that produces IGP and AICAR from PRFAR using the ammonia provided by the HisH subunit. This Vibrio vulnificus (strain YJ016) protein is Putative imidazole glycerol phosphate synthase subunit hisF3 (hisF3).